Consider the following 620-residue polypeptide: MFDFQHQLKILPDKPGVYIMKNSLGEVIYVGKAKVLKNRVRQYFQNSKNHSEKVRAMVKNIAEFEYIVTDSEMEALILECNLIKKYSPRYNIALKDDKFYPFIKITTNEDFPRVYVTRNFAKDGNRYFGPYTNGTAVYEVMGLIKKLFPLRTCKKAIVEGGEPTRACLNYHINLCKAPCAGYISKAEYWKMIDEIINILNGTDTSIIKNLKLEMEKAAEELEFEKAAKIRDRILAIELISEKQKMFTVKEGDEDFIDLYTDEKDGCAQVFFVREGKVTGREHFMIENISDDPVKEVISSFIASFYGGTAQIPKTIYVPEEIEDQELIEKFLTEKRGSKVWIKVPKKGDKKNLLDMVRNNAKIMLDQFKEKMVEEKELNKSALIELADVLGLDSLPTRIEAYDISNIQGVDSVGTMVVFENGKAKNSDYRRFKIKSVKGPNDYESMREILSRRFSHGLEEVNKIKERNLEYSKGKFCIFPDLIMMDGGKGQVNIALEVLKDFGIEIPVCGLVKDDKHRTRGIIFNNEEILIRRGSGLMNLITRVQDEVHRYAITYHRSLRDKRTLHSILEDIPRIGEKRRRNLLMKFGSIDNIKKASMEELLDTPGIDKRAAESIKQYFSS.

Residues 13 to 92 (DKPGVYIMKN…IKKYSPRYNI (80 aa)) form the GIY-YIG domain. The UVR domain occupies 204–239 (TSIIKNLKLEMEKAAEELEFEKAAKIRDRILAIELI).

The protein belongs to the UvrC family. As to quaternary structure, interacts with UvrB in an incision complex.

The protein localises to the cytoplasm. The UvrABC repair system catalyzes the recognition and processing of DNA lesions. UvrC both incises the 5' and 3' sides of the lesion. The N-terminal half is responsible for the 3' incision and the C-terminal half is responsible for the 5' incision. The sequence is that of UvrABC system protein C from Clostridium perfringens (strain SM101 / Type A).